We begin with the raw amino-acid sequence, 69 residues long: Light-harvesting protein B-870 beta chain (69 aa).

A propeptide spanning residues 1-2 (MA) is cleaved from the precursor. Residues 3–22 (EVKQESLSGITEGEAKEFHK) are Cytoplasmic-facing. A bacteriochlorophyll contacts are provided by histidine 21 and histidine 39. A helical transmembrane segment spans residues 23–45 (IFTSSILVFFGVAAFAHLLVWIW). Residues 46–56 (RPWVPGPNGYS) lie on the Periplasmic side of the membrane. The propeptide occupies 57–69 (ALETLTQTLTYLS).

It belongs to the antenna complex beta subunit family. As to quaternary structure, the core complex is formed by different alpha and beta chains, binding bacteriochlorophyll molecules, and arranged most probably in tetrameric structures disposed around the reaction center. The non-pigmented gamma chains may constitute additional components.

The protein localises to the cell inner membrane. In terms of biological role, antenna complexes are light-harvesting systems, which transfer the excitation energy to the reaction centers. The protein is Light-harvesting protein B-870 beta chain of Rhodospirillum rubrum (strain ATCC 11170 / ATH 1.1.1 / DSM 467 / LMG 4362 / NCIMB 8255 / S1).